The sequence spans 915 residues: MQQQHLFRFNILCLSLMTALPAYAENVQAGQAQEKQLDTIQVKAKKQKTRRDNEVTGLGKLVKSSDTLSKEQVLNIRDLTRYDPGIAVVEQGRGASSGYSIRGMDKNRVSLTVDGVSQIQSYTAQAALGGTRTAGSSGAINEIEYENVKAVEISKGSNSVEQGSGALAGSVAFQTKTADDVIGEGRQWGIQSKTAYSGKNRGLTQSIALAGRIGGAEALLIHTGRRAGEIRAHEDAGRGVQSFNRLVPVEDSSNYAYFIVKEECKNGSYETCKANPKKDVVGKDERQTVSTRDYTGPNRFLADPLSYESRSWLFRPGFRFENKRHYIGGILEHTQQTFDTRDMTVPAFLTKAVFDANKKQAGSLPGNGKYAGNHKYGGLFTNGENGALVGAEYGTGVFYDETHTKSRYGLEYVYTNADKDTWADYARLSYDRQGIGLDNHFQQTHCSADGSDKYCRPSADKPFSYYKSDRVIYGESHRLLQAAFKKSFDTAKIRHNLSVNLGFDRFGSNLRHQDYYYQHANRAYSSNTPPQNNGKKISPNGSETSPYWVTIGRGNVVTGQICRLGNNTYTDCTPRSINGKSYYAAVRDNVRLGRWADVGAGLRYDYRSTHSDDGSVSTGTHRTLSWNAGIVLKPTDWLDLTYRTSTGFRLPSFAEMYGWRAGVQSKAVKIDPEKSFNKEAGIVFKGDFGNLEASWFNNAYRDLIVRGYEAQIKDGKEEAKGDPAYLNAQSARITGINILGKIDWNGVWDKLPEGWYSTFAYNRVRVRDIKKRADRTDIQSHLFDAIQPSRYVVGLGYDQPEGKWGVNGMLTYSKAKEITELLGSRALLNGNSRNTKATARRTRPWYIVDVSGYYTVKKHFTLRAGVYNLLNYRYVTWENVRQTAGGAVNQHKNVGVYNRYAAPGRNYTFSLEMKF.

Positions 1 to 24 are cleaved as a signal peptide; it reads MQQQHLFRFNILCLSLMTALPAYA. The Periplasmic portion of the chain corresponds to 25–187; it reads ENVQAGQAQE…ADDVIGEGRQ (163 aa). The TonB box signature appears at 38 to 45; it reads DTIQVKAK. The TBDR plug domain maps to 51–176; that stretch reads RDNEVTGLGK…LAGSVAFQTK (126 aa). The tract at residues 121-139 is plug loop, interacts with transferrin; that stretch reads SYTAQAALGGTRTAGSSGA. One can recognise a TBDR beta-barrel domain in the interval 187-915; sequence QWGIQSKTAY…NYTFSLEMKF (729 aa). The beta stranded transmembrane segment at 188–197 threads the bilayer; the sequence is WGIQSKTAYS. At 198–203 the chain is on the extracellular side; that stretch reads GKNRGL. Residues 204-213 traverse the membrane as a beta stranded segment; the sequence is TQSIALAGRI. The Periplasmic segment spans residues 214-215; it reads GG. A beta stranded membrane pass occupies residues 216–225; that stretch reads AEALLIHTGR. Residues 226-309 are Extracellular-facing; that stretch reads RAGEIRAHED…FLADPLSYES (84 aa). Residues 310–319 traverse the membrane as a beta stranded segment; that stretch reads RSWLFRPGFR. At 320 to 324 the chain is on the periplasmic side; it reads FENKR. A beta stranded membrane pass occupies residues 325–334; sequence HYIGGILEHT. At 335–406 the chain is on the extracellular side; the sequence is QQTFDTRDMT…VFYDETHTKS (72 aa). The tract at residues 351 to 361 is L3 helix finger, interacts with transferrin; sequence KAVFDANKKQA. Residues 407–415 form a beta stranded membrane-spanning segment; it reads RYGLEYVYT. Residues 416-423 lie on the Periplasmic side of the membrane; sequence NADKDTWA. The chain crosses the membrane as a beta stranded span at residues 424–433; it reads DYARLSYDRQ. The Extracellular portion of the chain corresponds to 434-478; that stretch reads GIGLDNHFQQTHCSADGSDKYCRPSADKPFSYYKSDRVIYGESHR. A beta stranded membrane pass occupies residues 479–488; the sequence is LLQAAFKKSF. Topologically, residues 489–494 are periplasmic; the sequence is DTAKIR. The beta stranded transmembrane segment at 495–504 threads the bilayer; the sequence is HNLSVNLGFD. The Extracellular portion of the chain corresponds to 505 to 583; sequence RFGSNLRHQD…PRSINGKSYY (79 aa). The disordered stretch occupies residues 523 to 542; that stretch reads AYSSNTPPQNNGKKISPNGS. The beta stranded transmembrane segment at 584 to 592 threads the bilayer; the sequence is AAVRDNVRL. Topologically, residues 593–594 are periplasmic; sequence GR. A beta stranded transmembrane segment spans residues 595–603; the sequence is WADVGAGLR. The Extracellular portion of the chain corresponds to 604-623; sequence YDYRSTHSDDGSVSTGTHRT. Residues 624-633 traverse the membrane as a beta stranded segment; the sequence is LSWNAGIVLK. The Periplasmic portion of the chain corresponds to 634 to 637; the sequence is PTDW. Residues 638-647 form a beta stranded membrane-spanning segment; that stretch reads LDLTYRTSTG. Topologically, residues 648 to 675 are extracellular; that stretch reads FRLPSFAEMYGWRAGVQSKAVKIDPEKS. The chain crosses the membrane as a beta stranded span at residues 676–685; the sequence is FNKEAGIVFK. Topologically, residues 686 to 689 are periplasmic; it reads GDFG. A beta stranded transmembrane segment spans residues 690-699; that stretch reads NLEASWFNNA. Residues 700–733 lie on the Extracellular side of the membrane; the sequence is YRDLIVRGYEAQIKDGKEEAKGDPAYLNAQSARI. A beta stranded transmembrane segment spans residues 734-743; sequence TGINILGKID. Residues 744–755 are Periplasmic-facing; sequence WNGVWDKLPEGW. Residues 756–765 traverse the membrane as a beta stranded segment; sequence YSTFAYNRVR. Topologically, residues 766-790 are extracellular; it reads VRDIKKRADRTDIQSHLFDAIQPSR. The beta stranded transmembrane segment at 791–799 threads the bilayer; it reads YVVGLGYDQ. Residues 800–802 are Periplasmic-facing; it reads PEG. Residues 803–811 traverse the membrane as a beta stranded segment; that stretch reads KWGVNGMLT. At 812-845 the chain is on the extracellular side; sequence YSKAKEITELLGSRALLNGNSRNTKATARRTRPW. The beta stranded transmembrane segment at 846-855 threads the bilayer; it reads YIVDVSGYYT. Residues 856–860 lie on the Periplasmic side of the membrane; that stretch reads VKKHF. The chain crosses the membrane as a beta stranded span at residues 861–870; the sequence is TLRAGVYNLL. Topologically, residues 871-905 are extracellular; the sequence is NYRYVTWENVRQTAGGAVNQHKNVGVYNRYAAPGR. Residues 898-915 carry the TonB C-terminal box motif; that stretch reads NRYAAPGRNYTFSLEMKF. Residues 906–915 traverse the membrane as a beta stranded segment; sequence NYTFSLEMKF.

It belongs to the TonB-dependent receptor family. As to quaternary structure, binds both human apo- and holo-transferrin (TF), via the TF C-terminus. Forms a large complex with TF and TbpB.

It is found in the cell outer membrane. In terms of biological role, neisseria acquires iron by extracting it from serum transferrin (TF) in its human host. Acts as a TF receptor and is required for TF utilization. Binds both apo- and holo-TF, via the TF C-terminus. This chain is Transferrin-binding protein A, found in Neisseria meningitidis serogroup B (strain ATCC BAA-335 / MC58).